Consider the following 889-residue polypeptide: Voltage-gated potassium channel KCNC3 (889 aa).

An important for normal N-type inactivation region spans residues 1 to 80 (MLSSVCVWSF…CSGLPAVAMG (80 aa)). At 1–291 (MLSSVCVWSF…EDPYSSRAAR (291 aa)) the chain is on the cytoplasmic side. Residues 10–66 (FSGRQGTRKQHSQPAPTPQPPESSPPPLLPPPQQQCAQPGTAASPAGAPLSCGPGGR) are disordered. The span at 24–42 (APTPQPPESSPPPLLPPPQ) shows a compositional bias: pro residues. Zn(2+)-binding residues include H159, C165, C186, and C187. The interval 202–231 (DSFEAPDSSGNANANAGGAHDAGLDDEAGA) is disordered. Residues 211–222 (GNANANAGGAHD) are compositionally biased toward low complexity. The chain crosses the membrane as a helical span at residues 292–310 (YVAFASLFFILISITTFCL). N321 carries an N-linked (GlcNAc...) asparagine glycan. The chain crosses the membrane as a helical span at residues 352 to 371 (VEGVCVVWFTFEFLMRVTFC). At 372–380 (PDKVEFLKS) the chain is on the cytoplasmic side. The chain crosses the membrane as a helical span at residues 381-399 (SLNIIDCVAILPFYLEVGL). Residues 413-435 (FLRVVRFVRILRIFKLTRHFVGL) form a helical; Voltage-sensor membrane-spanning segment. The Cytoplasmic portion of the chain corresponds to 436–448 (RVLGHTLRASTNE). A helical transmembrane segment spans residues 449-470 (FLLLIIFLALGVLIFATMIYYA). The K(+) site is built by T504, L505, G506, and Y507. Residues 504 to 509 (TLGYGD) carry the Selectivity filter motif. A helical transmembrane segment spans residues 519–540 (LVGALCALAGVLTIAMPVPVIV). Over 541 to 889 (NNFGMYYSLA…FPSRHSSPAV (349 aa)) the chain is Cytoplasmic. 3 disordered regions span residues 557-627 (PKKK…LLRG), 691-834 (IDQP…PQSL), and 852-889 (TLGFPLSLPPRLATGNGGRECPRDPGLPFPSRHSSPAV). An Omega-N-methylarginine modification is found at R626. A phosphoserine mark is found at S697 and S702. Residues 748–764 (SQAPPASCPTSTPTQQP) are compositionally biased toward low complexity. T759 bears the Phosphothreonine mark. Residues 794–808 (HRSHQPPGKHQRGGR) show a composition bias toward basic residues.

It belongs to the potassium channel family. C (Shaw) (TC 1.A.1.2) subfamily. Kv3.3/KCNC3 sub-subfamily. Homotetramer. Heterotetramer with KCNC1. Interacts (via C-terminus) with HAX1; this interaction modulates channel gating. Identified in a complex with ACTR3, a subunit of the Arp2/3 complex; this interaction is indirect and depends on the presence of HAX1. In terms of processing, N-glycosylated. In terms of tissue distribution, detected on Purkinje cells in the cerebellum molecular layer (at protein level).

It is found in the cell membrane. Its subcellular location is the presynaptic cell membrane. The protein resides in the perikaryon. It localises to the cell projection. The protein localises to the axon. It is found in the dendrite. Its subcellular location is the dendritic spine membrane. The protein resides in the cytoplasm. It localises to the cell cortex. The protein localises to the cytoskeleton. The enzyme catalyses K(+)(in) = K(+)(out). Its function is as follows. Voltage-gated potassium channel that plays an important role in the rapid repolarization of fast-firing brain neurons. The channel opens in response to the voltage difference across the membrane, forming a potassium-selective channel through which potassium ions pass in accordance with their electrochemical gradient. The channel displays rapid activation and inactivation kinetics. It plays a role in the regulation of the frequency, shape and duration of action potentials in Purkinje cells. Required for normal survival of cerebellar neurons, probably via its role in regulating the duration and frequency of action potentials that in turn regulate the activity of voltage-gated Ca(2+) channels and cellular Ca(2+) homeostasis. Required for normal motor function. Plays a role in the reorganization of the cortical actin cytoskeleton and the formation of actin veil structures in neuronal growth cones via its interaction with HAX1 and the Arp2/3 complex. This Rattus norvegicus (Rat) protein is Voltage-gated potassium channel KCNC3.